A 329-amino-acid chain; its full sequence is Deoxynucleotidyltransferase terminal-interacting protein 1 (329 aa).

Residues 1–27 form a disordered region; it reads MGATGDVEQPRGPGGAERGGPELGDAG. Residues 12–22 are compositionally biased toward gly residues; the sequence is GPGGAERGGPE. The important for dimerization stretch occupies residues 56–147; that stretch reads MTTSFTDPAI…RLTHELPGIK (92 aa). Residues 159–173 constitute a DNA-binding region (a.T hook); that stretch reads RGSPIPKKRKGRPPG. Ser-161 carries the phosphoserine modification. Positions 164–170 match the Nuclear localization signal motif; that stretch reads PKKRKGR. The interval 197–316 is important for DNA and nucleosome binding; it reads REGPKWDPAR…MRKYMETLRT (120 aa). The H-T-H motif DNA-binding region spans 216-237; the sequence is GSRANKALGMGGTRGRIYIKHP.

As to quaternary structure, monomer and homodimer. A minor proportion may form homotrimers. Interacts with ZNF541. Interacts with the terminal deoxynucleotidyltransferase DNTT. Interacts with TRERF1. Identified in a histone deacetylase complex that contains DNTTIP1, HDAC1 and MIDEAS; this complex assembles into a tetramer that contains four copies of each protein chain. Component of a histone deacetylase complex containing DNTTIP1, ZNF541, HDAC1 and HDAC2. Identified in a complex with KCTD19, HDAC1, HDAC2 and ZNF541.

Its subcellular location is the nucleus. Functionally, increases DNTT terminal deoxynucleotidyltransferase activity (in vitro). Also acts as a transcriptional regulator, binding to the consensus sequence 5'-GNTGCATG-3' following an AT-tract. Associates with RAB20 promoter and positively regulates its transcription. Binds DNA and nucleosomes; may recruit HDAC1 complexes to nucleosomes or naked DNA. This chain is Deoxynucleotidyltransferase terminal-interacting protein 1 (DNTTIP1), found in Bos taurus (Bovine).